Reading from the N-terminus, the 260-residue chain is Alpha-acetolactate decarboxylase (260 aa).

It belongs to the alpha-acetolactate decarboxylase family.

The catalysed reaction is (2S)-2-acetolactate + H(+) = (R)-acetoin + CO2. The protein operates within polyol metabolism; (R,R)-butane-2,3-diol biosynthesis; (R,R)-butane-2,3-diol from pyruvate: step 2/3. In terms of biological role, converts acetolactate into acetoin. In Methylococcus capsulatus (strain ATCC 33009 / NCIMB 11132 / Bath), this protein is Alpha-acetolactate decarboxylase (budA).